The following is a 76-amino-acid chain: MTSVQSATCCCLLWLVLCVQLVTPDSPATAQLSRHLTARVPVGPALAYACSVMCAKGYDTVVCTCTRRRGVVSSSI.

Residues 1–24 (MTSVQSATCCCLLWLVLCVQLVTP) form the signal peptide. A propeptide spanning residues 25 to 39 (DSPATAQLSRHLTAR) is cleaved from the precursor. 2 disulfide bridges follow: cysteine 50/cysteine 63 and cysteine 54/cysteine 65. An Arginine amide modification is found at arginine 69. The propeptide occupies 71 to 76 (VVSSSI).

This sequence belongs to the conotoxin J superfamily. As to expression, expressed by the venom duct.

The protein localises to the secreted. In terms of biological role, highly inhibits both nicotinic acetylcholine receptors (neuronal (alpha-3/beta-4) and muscular (alpha-1/beta-1/epsilon/delta) subtypes) and the voltage-gated potassium channel Kv1.6/KCNA6 subtype. The sequence is that of Conotoxin Bu28 from Conus bullatus (Bubble cone).